The following is a 467-amino-acid chain: 3-isopropylmalate dehydratase large subunit (467 aa).

Positions 347, 408, and 411 each coordinate [4Fe-4S] cluster.

It belongs to the aconitase/IPM isomerase family. LeuC type 1 subfamily. Heterodimer of LeuC and LeuD. It depends on [4Fe-4S] cluster as a cofactor.

It carries out the reaction (2R,3S)-3-isopropylmalate = (2S)-2-isopropylmalate. It participates in amino-acid biosynthesis; L-leucine biosynthesis; L-leucine from 3-methyl-2-oxobutanoate: step 2/4. In terms of biological role, catalyzes the isomerization between 2-isopropylmalate and 3-isopropylmalate, via the formation of 2-isopropylmaleate. This Bordetella bronchiseptica (strain ATCC BAA-588 / NCTC 13252 / RB50) (Alcaligenes bronchisepticus) protein is 3-isopropylmalate dehydratase large subunit.